A 650-amino-acid chain; its full sequence is MSTQSLYSVPADIAANALVNNEQYQKMYQESVANPEGFWGEHAKRIDWIKPFTQVKDTSYDDQNLYIKWFHDGTLNASANCLDRHLASKGDDVAIIWEGDDASEQRKVTYRELHAEVCQFANALKAEGVKRGDVVTIYMPMVVEATVAMLACARIGAVHSVVFGGFSPDSIASRVIDGKSKLLITADEGVRGGRKIPLKGNIDEALNRPDVTTVETVIVLKRTGGAVNWVEGRDKWWHQVTDGAATECAVEEMGAEDPLFLLYTSGSTGNPKGVLHTTGGYLVYASMTHEYVFDYKPGEVYWCTADVGWITGHSYMVYGPLANGATILIHEGIPNFPSPARLGEIVDRHQVNILYTAPTLIRALMAEGKQHFDNFDGKSLRIMGSVGEPINPEAWRWYHEVIGHEHCPIVDTWWQTETGGILITPLPGATDTKPGSATRPFFGVQPALVDNEGNILEGATEGNLVLLDSWPGQMRTVYGDHERFVLTYFKTFRGMYFTGDGARRDEDGYYWITGRVDDVINVSGHRLGTAEVESALVAHDLVAEAAVVGYPHDIKGQGIYAYVTLTKGTEATEELRQELRQWVRKEIGALATPDLIQWASGLPKTRSGKIMRRFLRKIAANEITNLGDASTLADPSVIDTLIESRLNRAD.

Residues 191–194 (RGGR), threonine 311, and asparagine 335 contribute to the CoA site. ATP is bound by residues 387 to 389 (GEP), 411 to 416 (DTWWQT), aspartate 500, and arginine 515. Residue serine 523 coordinates CoA. ATP is bound at residue arginine 526. Valine 537, histidine 539, and valine 542 together coordinate Mg(2+). Arginine 584 lines the CoA pocket. Residue lysine 609 is modified to N6-acetyllysine.

The protein belongs to the ATP-dependent AMP-binding enzyme family. Mg(2+) is required as a cofactor. Acetylated. Deacetylation by the SIR2-homolog deacetylase activates the enzyme.

The enzyme catalyses acetate + ATP + CoA = acetyl-CoA + AMP + diphosphate. Catalyzes the conversion of acetate into acetyl-CoA (AcCoA), an essential intermediate at the junction of anabolic and catabolic pathways. AcsA undergoes a two-step reaction. In the first half reaction, AcsA combines acetate with ATP to form acetyl-adenylate (AcAMP) intermediate. In the second half reaction, it can then transfer the acetyl group from AcAMP to the sulfhydryl group of CoA, forming the product AcCoA. This is Acetyl-coenzyme A synthetase from Shewanella amazonensis (strain ATCC BAA-1098 / SB2B).